We begin with the raw amino-acid sequence, 148 residues long: MVDFRHIVRVAGVDLDGNKQLRWALTAIKGVGINFATMVCRVAGLDPFMKAGYLTDEQVKKIEEILQDPVSHGIPRWAVNRPKDYETGKDLHLITAKLDMAIREDIMRLRRIRAYRGIRHELGLPVRGQRTRSNFRRGQTVGVSKKKK.

The protein belongs to the universal ribosomal protein uS13 family. As to quaternary structure, part of the 30S ribosomal subunit. Forms a loose heterodimer with protein S19. Forms two bridges to the 50S subunit in the 70S ribosome.

In terms of biological role, located at the top of the head of the 30S subunit, it contacts several helices of the 16S rRNA. In the 70S ribosome it contacts the 23S rRNA (bridge B1a) and protein L5 of the 50S subunit (bridge B1b), connecting the 2 subunits; these bridges are implicated in subunit movement. This is Small ribosomal subunit protein uS13 from Pyrococcus horikoshii (strain ATCC 700860 / DSM 12428 / JCM 9974 / NBRC 100139 / OT-3).